Consider the following 330-residue polypeptide: Malate dehydrogenase (330 aa).

13–19 (GAAGQIG) contacts NAD(+). 2 residues coordinate substrate: arginine 94 and arginine 100. NAD(+) contacts are provided by residues asparagine 107, glutamine 114, and 131–133 (VGN). Asparagine 133 and arginine 164 together coordinate substrate. The active-site Proton acceptor is histidine 189.

It belongs to the LDH/MDH superfamily. MDH type 2 family.

The enzyme catalyses (S)-malate + NAD(+) = oxaloacetate + NADH + H(+). In terms of biological role, catalyzes the reversible oxidation of malate to oxaloacetate. This is Malate dehydrogenase from Deinococcus deserti (strain DSM 17065 / CIP 109153 / LMG 22923 / VCD115).